We begin with the raw amino-acid sequence, 299 residues long: NADH-cytochrome b5 reductase 2 (299 aa).

Residues 13–35 form a helical membrane-spanning segment; it reads SFKVLAPFAAAVGSVGIAYQYST. One can recognise an FAD-binding FR-type domain in the interval 50–154; that stretch reads DEWIDLKLAK…KGPVVKWKWE (105 aa). 157–192 contacts FAD; the sequence is QYKSIALIGGGTGITPLYQLMHEITKNPEDKTKVNL.

It belongs to the flavoprotein pyridine nucleotide cytochrome reductase family. FAD serves as cofactor.

It localises to the mitochondrion outer membrane. It carries out the reaction 2 Fe(III)-[cytochrome b5] + NADH = 2 Fe(II)-[cytochrome b5] + NAD(+) + H(+). Its function is as follows. May mediate the reduction of outer membrane cytochrome b5. The polypeptide is NADH-cytochrome b5 reductase 2 (MCR1) (Debaryomyces hansenii (strain ATCC 36239 / CBS 767 / BCRC 21394 / JCM 1990 / NBRC 0083 / IGC 2968) (Yeast)).